The primary structure comprises 210 residues: Riboflavin kinase (210 aa).

Over residues 1-11 (MRPSNPRPPVT) the composition is skewed to pro residues. Residues 1 to 24 (MRPSNPRPPVTGPDSGPEAPFPIR) are disordered. Thr-44 and Asn-46 together coordinate Mg(2+). Glu-113 acts as the Nucleophile in catalysis.

Belongs to the flavokinase family. Zn(2+) is required as a cofactor. Mg(2+) serves as cofactor.

The enzyme catalyses riboflavin + ATP = FMN + ADP + H(+). It functions in the pathway cofactor biosynthesis; FMN biosynthesis; FMN from riboflavin (ATP route): step 1/1. In terms of biological role, catalyzes the phosphorylation of riboflavin (vitamin B2) to form flavin mononucleotide (FMN) coenzyme. This is Riboflavin kinase (fmn1) from Emericella nidulans (strain FGSC A4 / ATCC 38163 / CBS 112.46 / NRRL 194 / M139) (Aspergillus nidulans).